The chain runs to 510 residues: ATP synthase subunit alpha (510 aa).

169–176 (GDRQTGKT) contacts ATP.

This sequence belongs to the ATPase alpha/beta chains family. F-type ATPases have 2 components, CF(1) - the catalytic core - and CF(0) - the membrane proton channel. CF(1) has five subunits: alpha(3), beta(3), gamma(1), delta(1), epsilon(1). CF(0) has four main subunits: a(1), b(1), b'(1) and c(9-12).

It is found in the cell inner membrane. The enzyme catalyses ATP + H2O + 4 H(+)(in) = ADP + phosphate + 5 H(+)(out). Functionally, produces ATP from ADP in the presence of a proton gradient across the membrane. The alpha chain is a regulatory subunit. The protein is ATP synthase subunit alpha of Rhodopseudomonas palustris (strain BisA53).